The chain runs to 145 residues: Lipoprotein signal peptidase (145 aa).

2 consecutive transmembrane segments (helical) span residues 57–77 (LFFI…MIKL) and 79–99 (ENSL…GNLI). Catalysis depends on residues aspartate 109 and aspartate 124. Residues 120–140 (FNVADSFIVVGAIILGYLMIF) traverse the membrane as a helical segment.

It belongs to the peptidase A8 family.

Its subcellular location is the cell membrane. It carries out the reaction Release of signal peptides from bacterial membrane prolipoproteins. Hydrolyzes -Xaa-Yaa-Zaa-|-(S,diacylglyceryl)Cys-, in which Xaa is hydrophobic (preferably Leu), and Yaa (Ala or Ser) and Zaa (Gly or Ala) have small, neutral side chains.. It participates in protein modification; lipoprotein biosynthesis (signal peptide cleavage). Its function is as follows. This protein specifically catalyzes the removal of signal peptides from prolipoproteins. The chain is Lipoprotein signal peptidase from Caldanaerobacter subterraneus subsp. tengcongensis (strain DSM 15242 / JCM 11007 / NBRC 100824 / MB4) (Thermoanaerobacter tengcongensis).